Consider the following 516-residue polypeptide: Maturase K (516 aa).

The protein belongs to the intron maturase 2 family. MatK subfamily.

Its subcellular location is the plastid. The protein resides in the chloroplast. In terms of biological role, usually encoded in the trnK tRNA gene intron. Probably assists in splicing its own and other chloroplast group II introns. The polypeptide is Maturase K (Disporum sessile (Japanese fairy bells)).